A 66-amino-acid polypeptide reads, in one-letter code: Beta-toxin Ct71 (66 aa).

The LCN-type CS-alpha/beta domain occupies 1-66 (KEGYIVNYHD…VWPLPKKTCN (66 aa)). 4 disulfide bridges follow: Cys-12-Cys-65, Cys-16-Cys-41, Cys-25-Cys-46, and Cys-29-Cys-48. Asn-66 bears the Asparagine amide mark.

Belongs to the long (4 C-C) scorpion toxin superfamily. Sodium channel inhibitor family. Beta subfamily. Expressed by the venom gland.

It is found in the secreted. Beta toxins bind voltage-independently at site-4 of sodium channels (Nav) and shift the voltage of activation toward more negative potentials thereby affecting sodium channel activation and promoting spontaneous and repetitive firing. Lethal to mice. The protein is Beta-toxin Ct71 of Centruroides tecomanus (Scorpion).